The primary structure comprises 1183 residues: PAN2-PAN3 deadenylation complex catalytic subunit PAN2 (1183 aa).

The disordered stretch occupies residues 1–24 (MDGWTEISRIAATTQPPKGPSPHI). WD repeat units lie at residues 159 to 207 (DLNK…SIKS), 269 to 309 (PFPA…NVFL), and 327 to 366 (SKAPFMTNLEISENGDFFAFSDSYATMHLWTLNNSGSTIT). Positions 369–520 (FVNFPASIEQ…FQYKVPLSRK (152 aa)) are linker. A USP domain is found at 521 to 919 (KIPNCYSRLQ…KPVILVYHDS (399 aa)). Residues 977–1151 (IAIDAEFVNL…EDAYTALLLY (175 aa)) form the Exonuclease domain. Positions 980, 982, 1090, and 1143 each coordinate a divalent metal cation.

This sequence belongs to the peptidase C19 family. PAN2 subfamily. Forms a heterotrimer with an asymmetric homodimer of the regulatory subunit PAN3 to form the poly(A)-nuclease (PAN) deadenylation complex. Requires a divalent metal cation as cofactor.

It localises to the cytoplasm. It carries out the reaction Exonucleolytic cleavage of poly(A) to 5'-AMP.. Its activity is regulated as follows. Positively regulated by the regulatory subunit PAN3. In terms of biological role, catalytic subunit of the poly(A)-nuclease (PAN) deadenylation complex, one of two cytoplasmic mRNA deadenylases involved in mRNA turnover. PAN specifically shortens poly(A) tails of RNA and the activity is stimulated by poly(A)-binding protein PAB1. PAN deadenylation is followed by rapid degradation of the shortened mRNA tails by the CCR4-NOT complex. Deadenylated mRNAs are then degraded by two alternative mechanisms, namely exosome-mediated 3'-5' exonucleolytic degradation, or deadenylation-dependent mRNA decaping and subsequent 5'-3' exonucleolytic degradation by XRN1. May also be involved in post-transcriptional maturation of mRNA poly(A) tails. The sequence is that of PAN2-PAN3 deadenylation complex catalytic subunit PAN2 from Scheffersomyces stipitis (strain ATCC 58785 / CBS 6054 / NBRC 10063 / NRRL Y-11545) (Yeast).